Consider the following 151-residue polypeptide: Putative pre-16S rRNA nuclease (151 aa).

This sequence belongs to the YqgF nuclease family.

The protein localises to the cytoplasm. Could be a nuclease involved in processing of the 5'-end of pre-16S rRNA. In Nitrosospira multiformis (strain ATCC 25196 / NCIMB 11849 / C 71), this protein is Putative pre-16S rRNA nuclease.